Consider the following 131-residue polypeptide: Aspartate 1-decarboxylase (131 aa).

The Schiff-base intermediate with substrate; via pyruvic acid role is filled by Ser25. Ser25 is subject to Pyruvic acid (Ser). Thr57 is a binding site for substrate. Tyr58 acts as the Proton donor in catalysis. 73–75 (GAA) provides a ligand contact to substrate.

Belongs to the PanD family. As to quaternary structure, heterooctamer of four alpha and four beta subunits. The cofactor is pyruvate. Is synthesized initially as an inactive proenzyme, which is activated by self-cleavage at a specific serine bond to produce a beta-subunit with a hydroxyl group at its C-terminus and an alpha-subunit with a pyruvoyl group at its N-terminus.

Its subcellular location is the cytoplasm. It catalyses the reaction L-aspartate + H(+) = beta-alanine + CO2. The protein operates within cofactor biosynthesis; (R)-pantothenate biosynthesis; beta-alanine from L-aspartate: step 1/1. Catalyzes the pyruvoyl-dependent decarboxylation of aspartate to produce beta-alanine. This Acaryochloris marina (strain MBIC 11017) protein is Aspartate 1-decarboxylase.